The following is a 410-amino-acid chain: F-box protein At3g19890 (410 aa).

The F-box domain maps to 2 to 49 (TMISDLSKDLVEEILSKAPITSLGAVRSTHKQWNALSKGRLLYKAEAK). A disordered region spans residues 386–410 (EDKCKSIKMVDTKRQRKKRKRKSKR). The span at 387-398 (DKCKSIKMVDTK) shows a compositional bias: basic and acidic residues. Over residues 399-410 (RQRKKRKRKSKR) the composition is skewed to basic residues.

The chain is F-box protein At3g19890 from Arabidopsis thaliana (Mouse-ear cress).